The primary structure comprises 750 residues: 3-isopropylmalate dehydratase (750 aa).

The [4Fe-4S] cluster site is built by cysteine 353, cysteine 413, and cysteine 416. The interval 492–524 is disordered; that stretch reads KYDGSPEVFKSTQDTTPAVKPPQPASDSSSSGG.

Belongs to the aconitase/IPM isomerase family. Monomer. It depends on [4Fe-4S] cluster as a cofactor.

It carries out the reaction (2R,3S)-3-isopropylmalate = (2S)-2-isopropylmalate. The protein operates within amino-acid biosynthesis; L-leucine biosynthesis; L-leucine from 3-methyl-2-oxobutanoate: step 2/4. Functionally, catalyzes the isomerization between 2-isopropylmalate and 3-isopropylmalate, via the formation of 2-isopropylmaleate. This chain is 3-isopropylmalate dehydratase (LEU1), found in Rhizopus niveus.